The sequence spans 471 residues: MSIQISETLTFECETGNYHTFCPISCVAWLYQKIEDSFFLVIGTKTCGYFLQNALGVMIFAEPRYAMAELEEGDISAQLNDYEELKRLCFQIKKDRNPSVIIWIGTCTTEIIKMDLEGMAPKLEVELGVPIVVARANGLDYAFTQGEDTVLAAMAHRCPERDLLIDENKVIQNQTIQNIFSLFSQKKKEETLKYLELKNHPPLVLFGSLPSTVASQLSLELKRQSIQVSGWLPTQRYTDLPSLGDGVYVCGVNPFLSRTATTLIRRRKCKLIGAPFPIGPDGTRAWIEKISSVFGIKTKGLEEREQQVWQSLKNYLNLVRGKSVFFMGDNLLEISLARFLIRCGMIVYEIGIPYMDKRYQAAELALLRNTCREMCTPMPRIVEKPDNYNQIQRMRELQPDLAITGMAHANPLEARGINTKWSVEFTFAQIHGFTNAKDVLELVTRPLRRNNSLEDLGWTNLIKKDNKIKVI.

[4Fe-4S] cluster-binding residues include Cys-22, Cys-47, and Cys-107.

It belongs to the BchN/ChlN family. Protochlorophyllide reductase is composed of three subunits; ChlL, ChlN and ChlB. Forms a heterotetramer of two ChlB and two ChlN subunits. It depends on [4Fe-4S] cluster as a cofactor.

Its subcellular location is the plastid. The protein localises to the chloroplast. It carries out the reaction chlorophyllide a + oxidized 2[4Fe-4S]-[ferredoxin] + 2 ADP + 2 phosphate = protochlorophyllide a + reduced 2[4Fe-4S]-[ferredoxin] + 2 ATP + 2 H2O. It functions in the pathway porphyrin-containing compound metabolism; chlorophyll biosynthesis (light-independent). Functionally, component of the dark-operative protochlorophyllide reductase (DPOR) that uses Mg-ATP and reduced ferredoxin to reduce ring D of protochlorophyllide (Pchlide) to form chlorophyllide a (Chlide). This reaction is light-independent. The NB-protein (ChlN-ChlB) is the catalytic component of the complex. The polypeptide is Light-independent protochlorophyllide reductase subunit N (Anthoceros angustus (Hornwort)).